The sequence spans 190 residues: Holliday junction branch migration complex subunit RuvA (190 aa).

The segment at 1–64 (MIGSLTGIIE…DNLTQLYGFL (64 aa)) is domain I. The interval 65–142 (DKQEQDYMRM…KMPIEETLII (78 aa)) is domain II. Position 143 (Lys-143) is a region of interest, flexible linker. Positions 143–190 (KEDDSLAALISLGYDKLKAFNAIQEIKANFPDDSIQEIIRKALQKLSQ) are domain III.

This sequence belongs to the RuvA family. Homotetramer. Forms an RuvA(8)-RuvB(12)-Holliday junction (HJ) complex. HJ DNA is sandwiched between 2 RuvA tetramers; dsDNA enters through RuvA and exits via RuvB. An RuvB hexamer assembles on each DNA strand where it exits the tetramer. Each RuvB hexamer is contacted by two RuvA subunits (via domain III) on 2 adjacent RuvB subunits; this complex drives branch migration. In the full resolvosome a probable DNA-RuvA(4)-RuvB(12)-RuvC(2) complex forms which resolves the HJ.

It is found in the cytoplasm. Functionally, the RuvA-RuvB-RuvC complex processes Holliday junction (HJ) DNA during genetic recombination and DNA repair, while the RuvA-RuvB complex plays an important role in the rescue of blocked DNA replication forks via replication fork reversal (RFR). RuvA specifically binds to HJ cruciform DNA, conferring on it an open structure. The RuvB hexamer acts as an ATP-dependent pump, pulling dsDNA into and through the RuvAB complex. HJ branch migration allows RuvC to scan DNA until it finds its consensus sequence, where it cleaves and resolves the cruciform DNA. The chain is Holliday junction branch migration complex subunit RuvA from Ehrlichia chaffeensis (strain ATCC CRL-10679 / Arkansas).